A 43-amino-acid polypeptide reads, in one-letter code: Protein PsbN (43 aa).

Residues 5 to 25 (TVLSIFISSLLLGITIYSIYI) form a helical membrane-spanning segment.

Belongs to the PsbN family.

The protein resides in the plastid. It localises to the chloroplast thylakoid membrane. Its function is as follows. May play a role in photosystem I and II biogenesis. This chain is Protein PsbN, found in Gracilaria tenuistipitata var. liui (Red alga).